A 546-amino-acid chain; its full sequence is uncharacterized protein (546 aa).

10 helical membrane-spanning segments follow: residues Trp-106–Tyr-126, Thr-145–Leu-165, Phe-172–Ala-192, Tyr-231–Gly-251, Trp-263–Phe-283, Leu-332–Ile-352, Gly-375–Ile-395, Leu-416–Thr-436, Trp-444–Val-464, and Trp-510–Tyr-530.

It belongs to the major facilitator superfamily. CAR1 family.

The protein localises to the endoplasmic reticulum membrane. This is an uncharacterized protein from Schizosaccharomyces pombe (strain 972 / ATCC 24843) (Fission yeast).